The primary structure comprises 354 residues: Small ribosomal subunit protein uS2 (354 aa).

Belongs to the universal ribosomal protein uS2 family.

This Methylorubrum populi (strain ATCC BAA-705 / NCIMB 13946 / BJ001) (Methylobacterium populi) protein is Small ribosomal subunit protein uS2.